The chain runs to 815 residues: (-)-kolavenyl diphosphate synthase TPS14, chloroplastic (815 aa).

The N-terminal 51 residues, 1–51 (MFMSSSSSSHARRPQLSSFSYLHPPLPFPGLSFFNTRDKRVNFDSTRIICI), are a transit peptide targeting the chloroplast. Lysine 247 is a substrate binding site. The Mg(2+) site is built by aspartate 379 and aspartate 381. Positions 379 to 382 (DIDD) match the DXDD motif motif. A substrate-binding site is contributed by lysine 465.

Belongs to the terpene synthase family. Tpsc subfamily. It depends on Mg(2+) as a cofactor.

Its subcellular location is the plastid. It is found in the chloroplast. The enzyme catalyses (2E,6E,10E)-geranylgeranyl diphosphate = (-)-kolavenyl diphosphate. Inhibited by high concentrations of magnesium. Its function is as follows. Diterpene synthase that catalyzes the formation of (-)-kolavenyl diphosphate from geranylgeranyl diphosphate (GGPP). The protein is (-)-kolavenyl diphosphate synthase TPS14, chloroplastic of Tripterygium wilfordii (Thunder God vine).